The following is a 58-amino-acid chain: Small ribosomal subunit protein bS21 (58 aa).

Positions 28-58 (VLQDIRKHEHYEKPSIKKKKKSEAARKKKRF) are disordered. A compositionally biased stretch (basic and acidic residues) spans 31-42 (DIRKHEHYEKPS). Positions 43–58 (IKKKKKSEAARKKKRF) are enriched in basic residues.

The protein belongs to the bacterial ribosomal protein bS21 family.

This chain is Small ribosomal subunit protein bS21, found in Syntrophomonas wolfei subsp. wolfei (strain DSM 2245B / Goettingen).